A 502-amino-acid chain; its full sequence is NADH-quinone oxidoreductase subunit N (502 aa).

14 helical membrane-spanning segments follow: residues T16 to F36, M47 to F67, L85 to L105, F113 to V133, L138 to M158, F172 to L192, I213 to M233, S248 to M268, F273 to T293, M310 to T330, L337 to I357, A387 to W407, M410 to L430, and T470 to I490.

This sequence belongs to the complex I subunit 2 family. As to quaternary structure, NDH-1 is composed of 14 different subunits. Subunits NuoA, H, J, K, L, M, N constitute the membrane sector of the complex.

The protein resides in the cell inner membrane. It catalyses the reaction a quinone + NADH + 5 H(+)(in) = a quinol + NAD(+) + 4 H(+)(out). Functionally, NDH-1 shuttles electrons from NADH, via FMN and iron-sulfur (Fe-S) centers, to quinones in the respiratory chain. The immediate electron acceptor for the enzyme in this species is believed to be ubiquinone. Couples the redox reaction to proton translocation (for every two electrons transferred, four hydrogen ions are translocated across the cytoplasmic membrane), and thus conserves the redox energy in a proton gradient. The chain is NADH-quinone oxidoreductase subunit N from Sulfurimonas denitrificans (strain ATCC 33889 / DSM 1251) (Thiomicrospira denitrificans (strain ATCC 33889 / DSM 1251)).